The following is a 102-amino-acid chain: uncharacterized protein (102 aa).

A run of 2 helical transmembrane segments spans residues 21-43 and 58-80; these read FSSS…TPVF and SFAV…YFFC.

The protein localises to the membrane. This is an uncharacterized protein from Saccharomyces cerevisiae (strain ATCC 204508 / S288c) (Baker's yeast).